We begin with the raw amino-acid sequence, 410 residues long: 3-phosphoshikimate 1-carboxyvinyltransferase (410 aa).

Lys-21, Ser-22, and Arg-26 together coordinate 3-phosphoshikimate. Lys-21 provides a ligand contact to phosphoenolpyruvate. Residues Gly-69 and Arg-97 each coordinate phosphoenolpyruvate. The 3-phosphoshikimate site is built by Ser-143, Ser-144, Gln-145, Ser-171, Asp-288, and Lys-315. Gln-145 serves as a coordination point for phosphoenolpyruvate. The active-site Proton acceptor is Asp-288. Phosphoenolpyruvate-binding residues include Arg-319, Arg-364, and Lys-389.

The protein belongs to the EPSP synthase family. As to quaternary structure, monomer.

The protein resides in the cytoplasm. The enzyme catalyses 3-phosphoshikimate + phosphoenolpyruvate = 5-O-(1-carboxyvinyl)-3-phosphoshikimate + phosphate. It functions in the pathway metabolic intermediate biosynthesis; chorismate biosynthesis; chorismate from D-erythrose 4-phosphate and phosphoenolpyruvate: step 6/7. Catalyzes the transfer of the enolpyruvyl moiety of phosphoenolpyruvate (PEP) to the 5-hydroxyl of shikimate-3-phosphate (S3P) to produce enolpyruvyl shikimate-3-phosphate and inorganic phosphate. This is 3-phosphoshikimate 1-carboxyvinyltransferase from Bacteroides fragilis (strain YCH46).